Here is a 352-residue protein sequence, read N- to C-terminus: Probable transcription factor At1g11510 (352 aa).

Disordered stretches follow at residues 1–132 and 239–269; these read MSRR…GGEE and MKSN…KNNC. Positions 56 to 66 are enriched in acidic residues; that stretch reads SGSDEETDSDS. Composition is skewed to basic and acidic residues over residues 89 to 101, 117 to 132, and 241 to 259; these read KTSE…RSLE, VSGE…GGEE, and SNEK…HELD.

The protein belongs to the GeBP family.

This Arabidopsis thaliana (Mouse-ear cress) protein is Probable transcription factor At1g11510.